Consider the following 396-residue polypeptide: DNA dC-&gt;dU-editing enzyme APOBEC3 (396 aa).

CMP/dCMP-type deaminase domains follow at residues glycine 38–alanine 154 and glutamate 205–leucine 324. A Zn(2+)-binding site is contributed by histidine 71. Catalysis depends on glutamate 73, which acts as the Proton donor. Cysteine 105, cysteine 108, histidine 255, cysteine 283, and cysteine 286 together coordinate Zn(2+).

It belongs to the cytidine and deoxycytidylate deaminase family. Homodimer. Zn(2+) serves as cofactor.

The protein localises to the cytoplasm. The enzyme catalyses a 2'-deoxycytidine in single-stranded DNA + H2O + H(+) = a 2'-deoxyuridine in single-stranded DNA + NH4(+). Its function is as follows. DNA deaminase (cytidine deaminase) which acts as an inhibitor of retrovirus replication and retrotransposon mobility via deaminase-dependent and -independent mechanisms. Selectively targets single-stranded DNA and does not deaminate double-stranded DNA or single- or double-stranded RNA. This chain is DNA dC-&gt;dU-editing enzyme APOBEC3 (APOBEC3), found in Cricetulus longicaudatus (Long-tailed dwarf hamster).